The primary structure comprises 352 residues: Peptide chain release factor 1 (352 aa).

Residue glutamine 229 is modified to N5-methylglutamine.

This sequence belongs to the prokaryotic/mitochondrial release factor family. Post-translationally, methylated by PrmC. Methylation increases the termination efficiency of RF1.

It is found in the cytoplasm. Its function is as follows. Peptide chain release factor 1 directs the termination of translation in response to the peptide chain termination codons UAG and UAA. The chain is Peptide chain release factor 1 from Gluconacetobacter diazotrophicus (strain ATCC 49037 / DSM 5601 / CCUG 37298 / CIP 103539 / LMG 7603 / PAl5).